The sequence spans 117 residues: Non-specific lipid-transfer protein (117 aa).

The N-terminal stretch at 1 to 26 is a signal peptide; that stretch reads MASSAFVKFTCALVMCMMVAAPLAEA. Cystine bridges form between Cys-29-Cys-76, Cys-39-Cys-53, Cys-54-Cys-99, and Cys-74-Cys-113.

Belongs to the plant LTP family.

Plant non-specific lipid-transfer proteins transfer phospholipids as well as galactolipids across membranes. May play a role in wax or cutin deposition in the cell walls of expanding epidermal cells and certain secretory tissues. Also has fungicide activity. This chain is Non-specific lipid-transfer protein (IWF1'), found in Beta vulgaris (Sugar beet).